A 266-amino-acid chain; its full sequence is Small ribosomal subunit protein eS1 (266 aa).

The tract at residues 236–266 (GAGTAAKATGDDTGAKVERADGYEPPIQESV) is disordered. Residues 244-257 (TGDDTGAKVERADG) show a composition bias toward basic and acidic residues.

It belongs to the eukaryotic ribosomal protein eS1 family. As to quaternary structure, component of the small ribosomal subunit. Mature ribosomes consist of a small (40S) and a large (60S) subunit. The 40S subunit contains about 33 different proteins and 1 molecule of RNA (18S). The 60S subunit contains about 49 different proteins and 3 molecules of RNA (28S, 5.8S and 5S). Part of the small subunit (SSU) processome, composed of more than 70 proteins and the RNA chaperone small nucleolar RNA (snoRNA) U3.

The protein resides in the cytoplasm. The protein localises to the nucleus. It is found in the nucleolus. Its function is as follows. Component of the small ribosomal subunit. The ribosome is a large ribonucleoprotein complex responsible for the synthesis of proteins in the cell. Part of the small subunit (SSU) processome, first precursor of the small eukaryotic ribosomal subunit. During the assembly of the SSU processome in the nucleolus, many ribosome biogenesis factors, an RNA chaperone and ribosomal proteins associate with the nascent pre-rRNA and work in concert to generate RNA folding, modifications, rearrangements and cleavage as well as targeted degradation of pre-ribosomal RNA by the RNA exosome. May play a role during erythropoiesis. In Tetraodon nigroviridis (Spotted green pufferfish), this protein is Small ribosomal subunit protein eS1 (rps3a).